Reading from the N-terminus, the 265-residue chain is H-2 class II histocompatibility antigen, A beta chain (265 aa).

The signal sequence occupies residues 1–27 (MALQIPSLLLSAAVVVLMVLSSPGTEG). A beta-1 region spans residues 28–122 (GDSERHFVYQ…PETHTSLRRL (95 aa)). Residues 28 to 226 (GDSERHFVYQ…RAQSESAWSK (199 aa)) are Extracellular-facing. Intrachain disulfides connect Cys42-Cys106 and Cys145-Cys201. Asn46 carries an N-linked (GlcNAc...) asparagine glycan. The interval 123–216 (EQPNVVISLS…SLKSPITVEW (94 aa)) is beta-2. Residues 125-213 (PNVVISLSRT…EHPSLKSPIT (89 aa)) form the Ig-like C1-type domain. The interval 217-226 (RAQSESAWSK) is connecting peptide. The helical transmembrane segment at 227–247 (MLSGIGGCVLGVIFLGLGLFI) threads the bilayer. At 248–265 (RHRSQKGPRGPPPAGLLQ) the chain is on the cytoplasmic side.

The protein belongs to the MHC class II family. Post-translationally, ubiquitinated in immature dendritic cells leading to down-regulation of MHC class II.

Its subcellular location is the membrane. In Mus musculus (Mouse), this protein is H-2 class II histocompatibility antigen, A beta chain (H2-Ab1).